The following is a 247-amino-acid chain: Triosephosphate isomerase (247 aa).

Substrate-binding residues include N10 and K12. H95 (electrophile) is an active-site residue. E165 functions as the Proton acceptor in the catalytic mechanism.

This sequence belongs to the triosephosphate isomerase family. Homodimer.

The catalysed reaction is D-glyceraldehyde 3-phosphate = dihydroxyacetone phosphate. Its pathway is carbohydrate biosynthesis; gluconeogenesis. It participates in carbohydrate degradation; glycolysis; D-glyceraldehyde 3-phosphate from glycerone phosphate: step 1/1. The sequence is that of Triosephosphate isomerase (TPI1) from Yarrowia lipolytica (strain CLIB 122 / E 150) (Yeast).